A 609-amino-acid chain; its full sequence is UvrABC system protein C (609 aa).

The 78-residue stretch at 15-92 folds into the GIY-YIG domain; sequence TGSGVYQMQD…IKQFRPRYNV (78 aa). In terms of domain architecture, UVR spans 202-237; sequence DQVIIKLTERMEVASENLVFEEAAHYRDQIRQLRRL.

It belongs to the UvrC family. Interacts with UvrB in an incision complex.

It is found in the cytoplasm. Functionally, the UvrABC repair system catalyzes the recognition and processing of DNA lesions. UvrC both incises the 5' and 3' sides of the lesion. The N-terminal half is responsible for the 3' incision and the C-terminal half is responsible for the 5' incision. This chain is UvrABC system protein C, found in Coxiella burnetii (strain CbuK_Q154) (Coxiella burnetii (strain Q154)).